We begin with the raw amino-acid sequence, 253 residues long: DnaJ homolog subfamily C member 8 (253 aa).

Position 2 is an N-acetylalanine (Ala-2). Ser-35 bears the Phosphoserine mark. Residues 57–124 enclose the J domain; that stretch reads NPFEVLQIDP…QKKRALDVIQ (68 aa). At Lys-146 the chain carries N6-acetyllysine. Basic and acidic residues predominate over residues 181–222; the sequence is EAKEMHERKRQREEEIEAQEKAKREREWQKNFEESRDGRVDS. The segment at 181–253 is disordered; that stretch reads EAKEMHERKR…PPKVKMEQRE (73 aa). 2 short sequence motifs (nuclear localization signal) span residues 189-192 and 203-206; these read KRQR and KRER. Ser-222 carries the phosphoserine modification. A compositionally biased stretch (basic residues) spans 231–240; it reads KGKKEKKNRT. The tract at residues 232-253 is essential for polyglutamine aggregation suppression; that stretch reads GKKEKKNRTFLRPPKVKMEQRE.

In terms of assembly, interacts with SRPK1. Interacts with HSP70 (HSPA1A or HSPA1B). In terms of tissue distribution, ubiquitous.

It is found in the nucleus. Functionally, suppresses polyglutamine (polyQ) aggregation of ATXN3 in neuronal cells. In Homo sapiens (Human), this protein is DnaJ homolog subfamily C member 8 (DNAJC8).